Reading from the N-terminus, the 135-residue chain is Large ribosomal subunit protein eL32 (135 aa).

Belongs to the eukaryotic ribosomal protein eL32 family.

The chain is Large ribosomal subunit protein eL32 from Methanococcus maripaludis (strain C6 / ATCC BAA-1332).